Reading from the N-terminus, the 123-residue chain is Hydrogenase maturation factor HypA (123 aa).

Residue H2 participates in Ni(2+) binding. Residues C77, C80, C96, and C99 each contribute to the Zn(2+) site.

This sequence belongs to the HypA/HybF family.

Involved in the maturation of [NiFe] hydrogenases. Required for nickel insertion into the metal center of the hydrogenase. The protein is Hydrogenase maturation factor HypA of Methanococcus aeolicus (strain ATCC BAA-1280 / DSM 17508 / OCM 812 / Nankai-3).